Consider the following 420-residue polypeptide: Serine hydroxymethyltransferase (420 aa).

(6S)-5,6,7,8-tetrahydrofolate contacts are provided by residues Leu-121 and 125–127; that span reads GHL. Lys-229 carries the post-translational modification N6-(pyridoxal phosphate)lysine. Position 355–357 (355–357) interacts with (6S)-5,6,7,8-tetrahydrofolate; the sequence is SPF.

This sequence belongs to the SHMT family. As to quaternary structure, homodimer. The cofactor is pyridoxal 5'-phosphate.

It localises to the cytoplasm. The catalysed reaction is (6R)-5,10-methylene-5,6,7,8-tetrahydrofolate + glycine + H2O = (6S)-5,6,7,8-tetrahydrofolate + L-serine. Its pathway is one-carbon metabolism; tetrahydrofolate interconversion. The protein operates within amino-acid biosynthesis; glycine biosynthesis; glycine from L-serine: step 1/1. Catalyzes the reversible interconversion of serine and glycine with tetrahydrofolate (THF) serving as the one-carbon carrier. This reaction serves as the major source of one-carbon groups required for the biosynthesis of purines, thymidylate, methionine, and other important biomolecules. Also exhibits THF-independent aldolase activity toward beta-hydroxyamino acids, producing glycine and aldehydes, via a retro-aldol mechanism. The protein is Serine hydroxymethyltransferase of Chromohalobacter salexigens (strain ATCC BAA-138 / DSM 3043 / CIP 106854 / NCIMB 13768 / 1H11).